The sequence spans 591 residues: Aspartate--tRNA(Asp/Asn) ligase (591 aa).

Residue Glu174 coordinates L-aspartate. The segment at 198–201 (QLFK) is aspartate. An L-aspartate-binding site is contributed by Arg220. ATP-binding positions include 220 to 222 (RDE) and Gln229. Residue His450 coordinates L-aspartate. Glu483 contributes to the ATP binding site. Arg490 serves as a coordination point for L-aspartate. 535 to 538 (GLDR) serves as a coordination point for ATP.

This sequence belongs to the class-II aminoacyl-tRNA synthetase family. Type 1 subfamily. In terms of assembly, homodimer.

Its subcellular location is the cytoplasm. The enzyme catalyses tRNA(Asx) + L-aspartate + ATP = L-aspartyl-tRNA(Asx) + AMP + diphosphate. Aspartyl-tRNA synthetase with relaxed tRNA specificity since it is able to aspartylate not only its cognate tRNA(Asp) but also tRNA(Asn). Reaction proceeds in two steps: L-aspartate is first activated by ATP to form Asp-AMP and then transferred to the acceptor end of tRNA(Asp/Asn). The protein is Aspartate--tRNA(Asp/Asn) ligase of Pseudomonas aeruginosa (strain LESB58).